The primary structure comprises 416 residues: Phosphatidylserine decarboxylase proenzyme, mitochondrial (416 aa).

At 1–67 (MPGKSTRPLP…GRLHFPQLAL (67 aa)) the chain is on the mitochondrial matrix side. Residues 68–86 (RRRLGQLSCMSKPALKLRS) traverse the membrane as a helical segment. Topologically, residues 87-416 (WPLTVLYYLL…IRFGEALGSL (330 aa)) are mitochondrial intermembrane. Active-site charge relay system; for autoendoproteolytic cleavage activity residues include Asp198, His274, and Ser385. Residue Ser385 is the Schiff-base intermediate with substrate; via pyruvic acid; for decarboxylase activity of the active site. Ser385 carries the pyruvic acid (Ser); by autocatalysis modification.

Belongs to the phosphatidylserine decarboxylase family. PSD-B subfamily. Eukaryotic type I sub-subfamily. Heterodimer of a large membrane-associated beta subunit and a small pyruvoyl-containing alpha subunit. The cofactor is pyruvate. Post-translationally, is synthesized initially as an inactive proenzyme. Formation of the active enzyme involves a self-maturation process in which the active site pyruvoyl group is generated from an internal serine residue via an autocatalytic post-translational modification. Two non-identical subunits are generated from the proenzyme in this reaction, and the pyruvate is formed at the N-terminus of the alpha chain, which is derived from the carboxyl end of the proenzyme. The autoendoproteolytic cleavage occurs by a canonical serine protease mechanism, in which the side chain hydroxyl group of the serine supplies its oxygen atom to form the C-terminus of the beta chain, while the remainder of the serine residue undergoes an oxidative deamination to produce ammonia and the pyruvoyl prosthetic group on the alpha chain. During this reaction, the Ser that is part of the protease active site of the proenzyme becomes the pyruvoyl prosthetic group, which constitutes an essential element of the active site of the mature decarboxylase.

It is found in the mitochondrion inner membrane. The protein resides in the cytoplasm. It localises to the lipid droplet. It carries out the reaction a 1,2-diacyl-sn-glycero-3-phospho-L-serine + H(+) = a 1,2-diacyl-sn-glycero-3-phosphoethanolamine + CO2. It functions in the pathway phospholipid metabolism; phosphatidylethanolamine biosynthesis. In terms of biological role, catalyzes the formation of phosphatidylethanolamine (PtdEtn) from phosphatidylserine (PtdSer). Plays a central role in phospholipid metabolism and in the interorganelle trafficking of phosphatidylserine. May be involved in lipid droplet biogenesis at the endoplasmic reticulum membrane. This chain is Phosphatidylserine decarboxylase proenzyme, mitochondrial, found in Bos taurus (Bovine).